We begin with the raw amino-acid sequence, 87 residues long: U3-theraphotoxin-Hhn1q (87 aa).

The N-terminal stretch at M1–A24 is a signal peptide. Residues S25–R52 constitute a propeptide that is removed on maturation. Intrachain disulfides connect C54–C67, C61–C72, and C66–C79.

The protein belongs to the neurotoxin 10 (Hwtx-1) family. 51 (Hntx-8) subfamily. Hntx-8 sub-subfamily. In terms of tissue distribution, expressed by the venom gland.

It is found in the secreted. In terms of biological role, ion channel inhibitor. This Cyriopagopus hainanus (Chinese bird spider) protein is U3-theraphotoxin-Hhn1q.